A 495-amino-acid chain; its full sequence is Ectonucleoside triphosphate diphosphohydrolase 2 (495 aa).

Over 1–4 (MAGK) the chain is Cytoplasmic. The helical transmembrane segment at 5 to 25 (LVSLVPPLLLAAAGLTGLLLL) threads the bilayer. The Extracellular segment spans residues 26–462 (CVPTQDVREP…PGLRKGTHFS (437 aa)). A glycan (N-linked (GlcNAc...) asparagine) is linked at Asn-64. A disulfide bond links Cys-75 and Cys-99. Residue Asn-129 is glycosylated (N-linked (GlcNAc...) asparagine). Glu-165 serves as the catalytic Proton acceptor. ATP is bound at residue 204 to 208 (GASTQ). Intrachain disulfides connect Cys-242/Cys-284 and Cys-265/Cys-310. N-linked (GlcNAc...) asparagine glycans are attached at residues Asn-294, Asn-306, and Asn-319. 2 disulfide bridges follow: Cys-323/Cys-328 and Cys-377/Cys-399. 2 N-linked (GlcNAc...) asparagine glycosylation sites follow: Asn-378 and Asn-443. The chain crosses the membrane as a helical span at residues 463-483 (SWVALLLLFTVLILAALVLLL). The Cytoplasmic segment spans residues 484–495 (RQVRSAKSPGAL).

It belongs to the GDA1/CD39 NTPase family. Ca(2+) is required as a cofactor. It depends on Mg(2+) as a cofactor. Expressed in brain, heart, vas deferens, kidney, skeletal muscle, thymus, lung and spleen. Weak expression in liver.

Its subcellular location is the cell membrane. Its function is as follows. In the nervous system, could hydrolyze ATP and other nucleotides to regulate purinergic neurotransmission. Hydrolyzes ADP only to a marginal extent. The chain is Ectonucleoside triphosphate diphosphohydrolase 2 (Entpd2) from Rattus norvegicus (Rat).